The chain runs to 387 residues: 8-amino-7-oxononanoate synthase (387 aa).

A substrate-binding site is contributed by R20. 107-108 (GY) contributes to the pyridoxal 5'-phosphate binding site. H132 contributes to the substrate binding site. S181, H209, and T238 together coordinate pyridoxal 5'-phosphate. K241 carries the N6-(pyridoxal phosphate)lysine modification. Residue T355 coordinates substrate.

This sequence belongs to the class-II pyridoxal-phosphate-dependent aminotransferase family. BioF subfamily. As to quaternary structure, homodimer. Pyridoxal 5'-phosphate serves as cofactor.

The catalysed reaction is 6-carboxyhexanoyl-[ACP] + L-alanine + H(+) = (8S)-8-amino-7-oxononanoate + holo-[ACP] + CO2. The protein operates within cofactor biosynthesis; biotin biosynthesis. Its function is as follows. Catalyzes the decarboxylative condensation of pimeloyl-[acyl-carrier protein] and L-alanine to produce 8-amino-7-oxononanoate (AON), [acyl-carrier protein], and carbon dioxide. This is 8-amino-7-oxononanoate synthase from Dechloromonas aromatica (strain RCB).